The sequence spans 501 residues: Pyruvate kinase 1 (501 aa).

Residue Arg50 participates in substrate binding. Residues Asn52, Ser54, Asp85, and Thr86 each coordinate K(+). 52–55 lines the ATP pocket; it reads NFSH. Arg92 and Lys178 together coordinate ATP. A Mg(2+)-binding site is contributed by Glu243. Substrate contacts are provided by Gly266, Asp267, and Thr299. Asp267 provides a ligand contact to Mg(2+).

This sequence belongs to the pyruvate kinase family. As to quaternary structure, homotetramer. Mg(2+) serves as cofactor. Requires K(+) as cofactor.

The enzyme catalyses pyruvate + ATP = phosphoenolpyruvate + ADP + H(+). It functions in the pathway carbohydrate degradation; glycolysis; pyruvate from D-glyceraldehyde 3-phosphate: step 5/5. The protein is Pyruvate kinase 1 (PYK1) of Candida glabrata (strain ATCC 2001 / BCRC 20586 / JCM 3761 / NBRC 0622 / NRRL Y-65 / CBS 138) (Yeast).